The sequence spans 126 residues: Putative esterase ComA2 (126 aa).

It belongs to the thioesterase PaaI family.

Functionally, is not required for competence. The chain is Putative esterase ComA2 (yuxO) from Bacillus subtilis (strain 168).